The sequence spans 282 residues: Formamidopyrimidine-DNA glycosylase (282 aa).

Catalysis depends on proline 2, which acts as the Schiff-base intermediate with DNA. The Proton donor role is filled by glutamate 3. Residue lysine 60 is the Proton donor; for beta-elimination activity of the active site. 3 residues coordinate DNA: histidine 99, arginine 118, and lysine 163. An FPG-type zinc finger spans residues 248 to 282; it reads WVYRRSGKNCKKCGEKILREKICGRSTHWCPNCQK. The active-site Proton donor; for delta-elimination activity is arginine 272.

Belongs to the FPG family. As to quaternary structure, monomer. It depends on Zn(2+) as a cofactor.

The catalysed reaction is Hydrolysis of DNA containing ring-opened 7-methylguanine residues, releasing 2,6-diamino-4-hydroxy-5-(N-methyl)formamidopyrimidine.. The enzyme catalyses 2'-deoxyribonucleotide-(2'-deoxyribose 5'-phosphate)-2'-deoxyribonucleotide-DNA = a 3'-end 2'-deoxyribonucleotide-(2,3-dehydro-2,3-deoxyribose 5'-phosphate)-DNA + a 5'-end 5'-phospho-2'-deoxyribonucleoside-DNA + H(+). In terms of biological role, involved in base excision repair of DNA damaged by oxidation or by mutagenic agents. Acts as a DNA glycosylase that recognizes and removes damaged bases. Has a preference for oxidized purines, such as 7,8-dihydro-8-oxoguanine (8-oxoG). Has AP (apurinic/apyrimidinic) lyase activity and introduces nicks in the DNA strand. Cleaves the DNA backbone by beta-delta elimination to generate a single-strand break at the site of the removed base with both 3'- and 5'-phosphates. This is Formamidopyrimidine-DNA glycosylase from Prochlorococcus marinus (strain NATL2A).